A 287-amino-acid chain; its full sequence is HTH-type transcriptional regulator MurR (287 aa).

The 77-residue stretch at Met1–Ser77 folds into the HTH rpiR-type domain. The H-T-H motif DNA-binding region spans Ser37–Gln56. The 141-residue stretch at Val128–Val268 folds into the SIS domain.

Homotetramer.

It participates in amino-sugar metabolism; N-acetylmuramate degradation [regulation]. In terms of biological role, represses the expression of the murPQ operon involved in the uptake and degradation of N-acetylmuramic acid (MurNAc). Binds to two adjacent inverted repeats within the operator region. MurNAc 6-phosphate, the substrate of MurQ, is the specific inducer that weakens binding of MurR to the operator. This chain is HTH-type transcriptional regulator MurR, found in Salmonella arizonae (strain ATCC BAA-731 / CDC346-86 / RSK2980).